Consider the following 475-residue polypeptide: Glutamate--tRNA ligase (475 aa).

A 'HIGH' region motif is present at residues Pro11–Gly21. The 'KMSKS' region signature appears at Lys240 to Arg244. ATP is bound at residue Lys243.

This sequence belongs to the class-I aminoacyl-tRNA synthetase family. Glutamate--tRNA ligase type 1 subfamily. In terms of assembly, monomer.

It is found in the cytoplasm. The catalysed reaction is tRNA(Glu) + L-glutamate + ATP = L-glutamyl-tRNA(Glu) + AMP + diphosphate. Catalyzes the attachment of glutamate to tRNA(Glu) in a two-step reaction: glutamate is first activated by ATP to form Glu-AMP and then transferred to the acceptor end of tRNA(Glu). The sequence is that of Glutamate--tRNA ligase from Bradyrhizobium diazoefficiens (strain JCM 10833 / BCRC 13528 / IAM 13628 / NBRC 14792 / USDA 110).